The primary structure comprises 525 residues: Putative ribose/galactose/methyl galactoside import ATP-binding protein (525 aa).

Residues 1 to 30 form a disordered region; that stretch reads MFGSATANPPAQRDLPSSDSDSPTPDAQPP. A compositionally biased stretch (low complexity) spans 14-25; that stretch reads DLPSSDSDSPTP. ABC transporter domains lie at 33-269 and 279-523; these read LEIS…VGRE and KPPG…SGHK. Position 65–72 (65–72) interacts with ATP; that stretch reads GENGAGKS.

Belongs to the ABC transporter superfamily. Carbohydrate importer 2 (CUT2) (TC 3.A.1.2) family.

It localises to the cell inner membrane. The catalysed reaction is D-ribose(out) + ATP + H2O = D-ribose(in) + ADP + phosphate + H(+). It catalyses the reaction D-galactose(out) + ATP + H2O = D-galactose(in) + ADP + phosphate + H(+). Functionally, part of an ABC transporter complex involved in carbohydrate import. Could be involved in ribose, galactose and/or methyl galactoside import. Responsible for energy coupling to the transport system. The protein is Putative ribose/galactose/methyl galactoside import ATP-binding protein of Pseudomonas savastanoi pv. phaseolicola (strain 1448A / Race 6) (Pseudomonas syringae pv. phaseolicola (strain 1448A / Race 6)).